The following is a 195-amino-acid chain: Protein GrpE (195 aa).

Belongs to the GrpE family. In terms of assembly, homodimer.

The protein resides in the cytoplasm. Functionally, participates actively in the response to hyperosmotic and heat shock by preventing the aggregation of stress-denatured proteins, in association with DnaK and GrpE. It is the nucleotide exchange factor for DnaK and may function as a thermosensor. Unfolded proteins bind initially to DnaJ; upon interaction with the DnaJ-bound protein, DnaK hydrolyzes its bound ATP, resulting in the formation of a stable complex. GrpE releases ADP from DnaK; ATP binding to DnaK triggers the release of the substrate protein, thus completing the reaction cycle. Several rounds of ATP-dependent interactions between DnaJ, DnaK and GrpE are required for fully efficient folding. The sequence is that of Protein GrpE from Francisella tularensis subsp. holarctica (strain OSU18).